Here is a 326-residue protein sequence, read N- to C-terminus: ATPase GET3 (326 aa).

Residue 32-39 (KGGVGKTT) coordinates ATP. Residue Asp61 is part of the active site. 2 residues coordinate ATP: Glu244 and Asn271. Residues Cys282 and Cys285 each contribute to the Zn(2+) site.

It belongs to the arsA ATPase family. Homodimer.

The protein localises to the cytoplasm. It localises to the endoplasmic reticulum. In terms of biological role, ATPase required for the post-translational delivery of tail-anchored (TA) proteins to the endoplasmic reticulum. Recognizes and selectively binds the transmembrane domain of TA proteins in the cytosol. This complex then targets to the endoplasmic reticulum by membrane-bound receptors, where the tail-anchored protein is released for insertion. This process is regulated by ATP binding and hydrolysis. ATP binding drives the homodimer towards the closed dimer state, facilitating recognition of newly synthesized TA membrane proteins. ATP hydrolysis is required for insertion. Subsequently, the homodimer reverts towards the open dimer state, lowering its affinity for the membrane-bound receptor, and returning it to the cytosol to initiate a new round of targeting. This Phaeosphaeria nodorum (strain SN15 / ATCC MYA-4574 / FGSC 10173) (Glume blotch fungus) protein is ATPase GET3.